Here is a 189-residue protein sequence, read N- to C-terminus: Protein GrpE (189 aa).

Residues 1–20 (MSDQQHSAPQNAAATASPSD) are compositionally biased toward polar residues. Residues 1–29 (MSDQQHSAPQNAAATASPSDSPEAVEATM) form a disordered region.

The protein belongs to the GrpE family. Homodimer.

The protein localises to the cytoplasm. Functionally, participates actively in the response to hyperosmotic and heat shock by preventing the aggregation of stress-denatured proteins, in association with DnaK and GrpE. It is the nucleotide exchange factor for DnaK and may function as a thermosensor. Unfolded proteins bind initially to DnaJ; upon interaction with the DnaJ-bound protein, DnaK hydrolyzes its bound ATP, resulting in the formation of a stable complex. GrpE releases ADP from DnaK; ATP binding to DnaK triggers the release of the substrate protein, thus completing the reaction cycle. Several rounds of ATP-dependent interactions between DnaJ, DnaK and GrpE are required for fully efficient folding. In Paracidovorax citrulli (strain AAC00-1) (Acidovorax citrulli), this protein is Protein GrpE.